A 265-amino-acid polypeptide reads, in one-letter code: Octanoyltransferase (265 aa).

The region spanning 35-254 (DEVPDTVLLL…HLRDVLENAE (220 aa)) is the BPL/LPL catalytic domain. Substrate is bound by residues 73–80 (RGGKITWH), 184–186 (AIG), and 197–199 (GFA). Cysteine 215 serves as the catalytic Acyl-thioester intermediate.

This sequence belongs to the LipB family.

The protein localises to the cytoplasm. The catalysed reaction is octanoyl-[ACP] + L-lysyl-[protein] = N(6)-octanoyl-L-lysyl-[protein] + holo-[ACP] + H(+). Its pathway is protein modification; protein lipoylation via endogenous pathway; protein N(6)-(lipoyl)lysine from octanoyl-[acyl-carrier-protein]: step 1/2. Functionally, catalyzes the transfer of endogenously produced octanoic acid from octanoyl-acyl-carrier-protein onto the lipoyl domains of lipoate-dependent enzymes. Lipoyl-ACP can also act as a substrate although octanoyl-ACP is likely to be the physiological substrate. The chain is Octanoyltransferase from Streptomyces coelicolor (strain ATCC BAA-471 / A3(2) / M145).